The chain runs to 147 residues: UPF0306 protein YpAngola_A4021 (147 aa).

This sequence belongs to the UPF0306 family.

The sequence is that of UPF0306 protein YpAngola_A4021 from Yersinia pestis bv. Antiqua (strain Angola).